The following is a 119-amino-acid chain: Mitochondrial zinc maintenance protein 1, mitochondrial (119 aa).

The transit peptide at 1-14 (MSNIRALGAYRNAL) directs the protein to the mitochondrion.

It belongs to the complex I LYR family. MZM1 subfamily. In terms of assembly, interacts with RIP1.

The protein localises to the mitochondrion matrix. Assembly factor required for Rieske Fe-S protein RIP1 incorporation into the cytochrome b-c1 (CIII) complex. Functions as a chaperone, binding to this subunit within the mitochondrial matrix and stabilizing it prior to its translocation and insertion into the late CIII dimeric intermediate within the mitochondrial inner membrane. Modulates the mitochondrial matrix zinc pool. The chain is Mitochondrial zinc maintenance protein 1, mitochondrial (MZM1) from Debaryomyces hansenii (strain ATCC 36239 / CBS 767 / BCRC 21394 / JCM 1990 / NBRC 0083 / IGC 2968) (Yeast).